The sequence spans 101 residues: Large ribosomal subunit protein uL24 (101 aa).

It belongs to the universal ribosomal protein uL24 family. In terms of assembly, part of the 50S ribosomal subunit.

One of two assembly initiator proteins, it binds directly to the 5'-end of the 23S rRNA, where it nucleates assembly of the 50S subunit. In terms of biological role, one of the proteins that surrounds the polypeptide exit tunnel on the outside of the subunit. The sequence is that of Large ribosomal subunit protein uL24 from Streptococcus pyogenes serotype M2 (strain MGAS10270).